A 179-amino-acid polypeptide reads, in one-letter code: Large ribosomal subunit protein uL6 (179 aa).

The protein belongs to the universal ribosomal protein uL6 family. In terms of assembly, part of the 50S ribosomal subunit.

This protein binds to the 23S rRNA, and is important in its secondary structure. It is located near the subunit interface in the base of the L7/L12 stalk, and near the tRNA binding site of the peptidyltransferase center. This Parasynechococcus marenigrum (strain WH8102) protein is Large ribosomal subunit protein uL6.